A 502-amino-acid chain; its full sequence is UDP-N-acetylmuramate--L-alanine ligase (502 aa).

120–126 (GTHGKTS) lines the ATP pocket.

Belongs to the MurCDEF family.

It is found in the cytoplasm. It catalyses the reaction UDP-N-acetyl-alpha-D-muramate + L-alanine + ATP = UDP-N-acetyl-alpha-D-muramoyl-L-alanine + ADP + phosphate + H(+). The protein operates within cell wall biogenesis; peptidoglycan biosynthesis. Cell wall formation. The chain is UDP-N-acetylmuramate--L-alanine ligase from Rhodococcus erythropolis (strain PR4 / NBRC 100887).